The sequence spans 182 residues: ATP synthase subunit delta 2 (182 aa).

It belongs to the ATPase delta chain family. As to quaternary structure, F-type ATPases have 2 components, F(1) - the catalytic core - and F(0) - the membrane proton channel. F(1) has five subunits: alpha(3), beta(3), gamma(1), delta(1), epsilon(1). F(0) has three main subunits: a(1), b(2) and c(10-14). The alpha and beta chains form an alternating ring which encloses part of the gamma chain. F(1) is attached to F(0) by a central stalk formed by the gamma and epsilon chains, while a peripheral stalk is formed by the delta and b chains.

The protein localises to the cell inner membrane. In terms of biological role, f(1)F(0) ATP synthase produces ATP from ADP in the presence of a proton or sodium gradient. F-type ATPases consist of two structural domains, F(1) containing the extramembraneous catalytic core and F(0) containing the membrane proton channel, linked together by a central stalk and a peripheral stalk. During catalysis, ATP synthesis in the catalytic domain of F(1) is coupled via a rotary mechanism of the central stalk subunits to proton translocation. Functionally, this protein is part of the stalk that links CF(0) to CF(1). It either transmits conformational changes from CF(0) to CF(1) or is implicated in proton conduction. In Photobacterium profundum (strain SS9), this protein is ATP synthase subunit delta 2.